A 133-amino-acid chain; its full sequence is Large ribosomal subunit protein uL22 (133 aa).

It belongs to the universal ribosomal protein uL22 family. As to quaternary structure, part of the 50S ribosomal subunit.

This protein binds specifically to 23S rRNA; its binding is stimulated by other ribosomal proteins, e.g. L4, L17, and L20. It is important during the early stages of 50S assembly. It makes multiple contacts with different domains of the 23S rRNA in the assembled 50S subunit and ribosome. Its function is as follows. The globular domain of the protein is located near the polypeptide exit tunnel on the outside of the subunit, while an extended beta-hairpin is found that lines the wall of the exit tunnel in the center of the 70S ribosome. This chain is Large ribosomal subunit protein uL22, found in Borrelia garinii subsp. bavariensis (strain ATCC BAA-2496 / DSM 23469 / PBi) (Borreliella bavariensis).